We begin with the raw amino-acid sequence, 32 residues long: Photosystem I reaction center subunit XII (32 aa).

A helical membrane pass occupies residues 4 to 26; sequence ISDSQIIVILLSVFITSILALRL.

The protein belongs to the PsaM family.

It is found in the plastid. The protein localises to the chloroplast thylakoid membrane. The chain is Photosystem I reaction center subunit XII from Marchantia polymorpha (Common liverwort).